The following is a 151-amino-acid chain: Urease accessory protein UreE (151 aa).

It belongs to the UreE family.

It localises to the cytoplasm. Involved in urease metallocenter assembly. Binds nickel. Probably functions as a nickel donor during metallocenter assembly. This chain is Urease accessory protein UreE, found in Bacillus cereus (strain ATCC 10987 / NRS 248).